Reading from the N-terminus, the 770-residue chain is Tripartite terminase subunit 1 (770 aa).

A C3H1-type zinc finger spans residues Cys199–His227. Phe675–Gly682 contributes to the ATP binding site.

This sequence belongs to the herpesviridae TRM1 protein family. In terms of assembly, associates with TRM2 and TRM3 to form the tripartite terminase complex. Interacts with portal protein.

It localises to the host nucleus. Its function is as follows. Component of the molecular motor that translocates viral genomic DNA in empty capsid during DNA packaging. Forms a tripartite terminase complex together with TRM2 and TRM3 in the host cytoplasm. Once the complex reaches the host nucleus, it interacts with the capsid portal vertex. This portal forms a ring in which genomic DNA is translocated into the capsid. TRM1 carries an endonuclease activity that plays an important role for the cleavage of concatemeric viral DNA into unit length genomes. The chain is Tripartite terminase subunit 1 from Varicella-zoster virus (strain Dumas) (HHV-3).